A 159-amino-acid chain; its full sequence is NADH-quinone oxidoreductase subunit B (159 aa).

[4Fe-4S] cluster-binding residues include Cys37, Cys38, Cys102, and Cys132.

It belongs to the complex I 20 kDa subunit family. In terms of assembly, NDH-1 is composed of 14 different subunits. Subunits NuoB, C, D, E, F, and G constitute the peripheral sector of the complex. Requires [4Fe-4S] cluster as cofactor.

It localises to the cell inner membrane. The catalysed reaction is a quinone + NADH + 5 H(+)(in) = a quinol + NAD(+) + 4 H(+)(out). In terms of biological role, NDH-1 shuttles electrons from NADH, via FMN and iron-sulfur (Fe-S) centers, to quinones in the respiratory chain. Couples the redox reaction to proton translocation (for every two electrons transferred, four hydrogen ions are translocated across the cytoplasmic membrane), and thus conserves the redox energy in a proton gradient. The chain is NADH-quinone oxidoreductase subunit B from Polaromonas naphthalenivorans (strain CJ2).